The following is a 237-amino-acid chain: Urease accessory protein UreF (237 aa).

Belongs to the UreF family. As to quaternary structure, ureD, UreF and UreG form a complex that acts as a GTP-hydrolysis-dependent molecular chaperone, activating the urease apoprotein by helping to assemble the nickel containing metallocenter of UreC. The UreE protein probably delivers the nickel.

The protein localises to the cytoplasm. Its function is as follows. Required for maturation of urease via the functional incorporation of the urease nickel metallocenter. This Streptococcus thermophilus (strain ATCC BAA-250 / LMG 18311) protein is Urease accessory protein UreF.